The following is a 70-amino-acid chain: DNA gyrase inhibitor YacG (70 aa).

Zn(2+)-binding residues include C9, C12, C28, and C32. The tract at residues 43 to 70 (ESRKIPGSSIDPESIVTTNNKQDNVDEQ) is disordered.

It belongs to the DNA gyrase inhibitor YacG family. In terms of assembly, interacts with GyrB. Zn(2+) serves as cofactor.

Its function is as follows. Inhibits all the catalytic activities of DNA gyrase by preventing its interaction with DNA. Acts by binding directly to the C-terminal domain of GyrB, which probably disrupts DNA binding by the gyrase. In Legionella pneumophila (strain Corby), this protein is DNA gyrase inhibitor YacG.